We begin with the raw amino-acid sequence, 131 residues long: Leptin receptor overlapping transcript-like 1 (131 aa).

Transmembrane regions (helical) follow at residues 7-27, 32-52, 69-89, and 100-120; these read LISLSFGGAIGLMFLMLGCAL, QYWPLFVLFFYILSPIPYCIA, LAIFLTTGVVVSAFGLPVVFA, and ALVLTGNTVIFATILGFFLVF.

Belongs to the OB-RGRP/VPS55 family. Interacts with RAB13.

The protein resides in the membrane. Negatively regulates growth hormone (GH) receptor cell surface expression in liver. May play a role in liver resistance to GH during periods of reduced nutrient availability. The chain is Leptin receptor overlapping transcript-like 1 (Leprotl1) from Rattus norvegicus (Rat).